Reading from the N-terminus, the 328-residue chain is Phosphatidylglycerol--prolipoprotein diacylglyceryl transferase (328 aa).

3 helical membrane passes run 15-35, 57-77, and 106-126; these read VIQG…ILIS, IFMF…STLV, and GMAI…TINT. R156 provides a ligand contact to a 1,2-diacyl-sn-glycero-3-phospho-(1'-sn-glycerol). A run of 2 helical transmembrane segments spans residues 242–262 and 289–309; these read GFIF…IEYL and ISMG…WIIV.

Belongs to the Lgt family.

The protein resides in the cell inner membrane. It carries out the reaction L-cysteinyl-[prolipoprotein] + a 1,2-diacyl-sn-glycero-3-phospho-(1'-sn-glycerol) = an S-1,2-diacyl-sn-glyceryl-L-cysteinyl-[prolipoprotein] + sn-glycerol 1-phosphate + H(+). The protein operates within protein modification; lipoprotein biosynthesis (diacylglyceryl transfer). Its function is as follows. Catalyzes the transfer of the diacylglyceryl group from phosphatidylglycerol to the sulfhydryl group of the N-terminal cysteine of a prolipoprotein, the first step in the formation of mature lipoproteins. In Borreliella burgdorferi (strain ATCC 35210 / DSM 4680 / CIP 102532 / B31) (Borrelia burgdorferi), this protein is Phosphatidylglycerol--prolipoprotein diacylglyceryl transferase.